The following is a 263-amino-acid chain: Undecaprenyl-diphosphatase (263 aa).

Helical transmembrane passes span 40–60, 87–107, 109–129, 186–206, 219–239, and 243–263; these read PGVL…LVYF, LLII…DFFV, AFHN…LLFF, FSFL…LLEW, AGAV…MGVV, and RLYA…AISS.

It belongs to the UppP family.

It is found in the cell inner membrane. The catalysed reaction is di-trans,octa-cis-undecaprenyl diphosphate + H2O = di-trans,octa-cis-undecaprenyl phosphate + phosphate + H(+). Functionally, catalyzes the dephosphorylation of undecaprenyl diphosphate (UPP). Confers resistance to bacitracin. This is Undecaprenyl-diphosphatase from Syntrophotalea carbinolica (strain DSM 2380 / NBRC 103641 / GraBd1) (Pelobacter carbinolicus).